Here is a 60-residue protein sequence, read N- to C-terminus: Large ribosomal subunit protein bL32 (60 aa).

The interval 1-21 (MAVPARHTSKAKKNKRRTHYK) is disordered. Positions 7 to 20 (HTSKAKKNKRRTHY) are enriched in basic residues.

It belongs to the bacterial ribosomal protein bL32 family.

This chain is Large ribosomal subunit protein bL32, found in Streptococcus thermophilus (strain ATCC BAA-250 / LMG 18311).